The primary structure comprises 129 residues: Cytochrome c oxidase subunit 5B, mitochondrial (129 aa).

The N-terminal 31 residues, 1-31 (MASRLLRGVGALASQALRARGPNGVSVVRSM), are a transit peptide targeting the mitochondrion. An N6-acetyllysine mark is found at K68 and K86. Zn(2+)-binding residues include C91, C93, C113, and C116. At K121 the chain carries N6-acetyllysine.

This sequence belongs to the cytochrome c oxidase subunit 5B family. As to quaternary structure, component of the cytochrome c oxidase (complex IV, CIV), a multisubunit enzyme composed of 14 subunits. The complex is composed of a catalytic core of 3 subunits MT-CO1, MT-CO2 and MT-CO3, encoded in the mitochondrial DNA, and 11 supernumerary subunits COX4I1 (or COX4I2), COX5A, COX5B, COX6A2 (or COX6A1), COX6B1 (or COX6B2), COX6C, COX7A1 (or COX7A2), COX7B, COX7C, COX8B and NDUFA4, which are encoded in the nuclear genome. The complex exists as a monomer or a dimer and forms supercomplexes (SCs) in the inner mitochondrial membrane with NADH-ubiquinone oxidoreductase (complex I, CI) and ubiquinol-cytochrome c oxidoreductase (cytochrome b-c1 complex, complex III, CIII), resulting in different assemblies (supercomplex SCI(1)III(2)IV(1) and megacomplex MCI(2)III(2)IV(2)).

It localises to the mitochondrion inner membrane. The protein operates within energy metabolism; oxidative phosphorylation. Its function is as follows. Component of the cytochrome c oxidase, the last enzyme in the mitochondrial electron transport chain which drives oxidative phosphorylation. The respiratory chain contains 3 multisubunit complexes succinate dehydrogenase (complex II, CII), ubiquinol-cytochrome c oxidoreductase (cytochrome b-c1 complex, complex III, CIII) and cytochrome c oxidase (complex IV, CIV), that cooperate to transfer electrons derived from NADH and succinate to molecular oxygen, creating an electrochemical gradient over the inner membrane that drives transmembrane transport and the ATP synthase. Cytochrome c oxidase is the component of the respiratory chain that catalyzes the reduction of oxygen to water. Electrons originating from reduced cytochrome c in the intermembrane space (IMS) are transferred via the dinuclear copper A center (CU(A)) of subunit 2 and heme A of subunit 1 to the active site in subunit 1, a binuclear center (BNC) formed by heme A3 and copper B (CU(B)). The BNC reduces molecular oxygen to 2 water molecules using 4 electrons from cytochrome c in the IMS and 4 protons from the mitochondrial matrix. The sequence is that of Cytochrome c oxidase subunit 5B, mitochondrial (COX5B) from Bos taurus (Bovine).